A 182-amino-acid polypeptide reads, in one-letter code: Large ribosomal subunit protein uL6 (182 aa).

The protein belongs to the universal ribosomal protein uL6 family. Part of the 50S ribosomal subunit.

This protein binds to the 23S rRNA, and is important in its secondary structure. It is located near the subunit interface in the base of the L7/L12 stalk, and near the tRNA binding site of the peptidyltransferase center. This Dehalococcoides mccartyi (strain CBDB1) protein is Large ribosomal subunit protein uL6.